We begin with the raw amino-acid sequence, 565 residues long: Nephronectin (565 aa).

An N-terminal signal peptide occupies residues 1–19 (MDFLLALVLVSSLYLQAAA). In terms of domain architecture, EGF-like 1 spans 52-87 (SWGQCQPVCQPRCKHGECIGPNKCKCHPGYAGKTCN). 6 cysteine pairs are disulfide-bonded: Cys-56/Cys-69, Cys-60/Cys-75, Cys-77/Cys-86, Cys-93/Cys-104, Cys-100/Cys-113, and Cys-115/Cys-127. One can recognise an EGF-like 2; calcium-binding domain in the interval 89–128 (DLNECGLKPRPCKHRCMNTYGSYKCYCLNGYMLMPDGSCS). Residues 132–168 (TCSMANCQYGCDVVKGQIRCQCPSPGLQLAPDGRTCV) enclose the EGF-like 3 domain. The region spanning 169–213 (DVDECATGRASCPRFRQCVNTFGSYICKCHKGFDLMYIGGKYQCH) is the EGF-like 4; calcium-binding domain. Disulfide bonds link Cys-173/Cys-186, Cys-180/Cys-195, Cys-197/Cys-212, Cys-218/Cys-231, Cys-225/Cys-240, and Cys-242/Cys-253. Positions 214 to 254 (DIDECSLGQYQCSSFARCYNIRGSYKCKCKEGYQGDGLTCV) constitute an EGF-like 5; calcium-binding domain. Residues 301-389 (YIPPIITNRP…KPRGDVFIPR (89 aa)) form a disordered region. Over residues 304-316 (PIITNRPTSKPTT) the composition is skewed to low complexity. The span at 317–347 (RPTPKPTPIPTPPPPPPLPTELRTPLPPTTP) shows a compositional bias: pro residues. An Integrin interaction motif is present at residues 382-384 (RGD). Residues 420–563 (HSCNFDHGLC…VSLKKGHCSE (144 aa)) form the MAM domain.

Belongs to the nephronectin family. As to quaternary structure, homodimer and homotrimer. As to expression, expressed in kidney and lung and to a lower extent in brain, pregnant uterus, placenta, thyroid gland and blood vessels.

Its subcellular location is the secreted. The protein resides in the extracellular space. It localises to the extracellular matrix. In terms of biological role, functional ligand of integrin alpha-8/beta-1 in kidney development. Regulates the expression of GDNF with integrin alpha-8/beta-1 which is essential for kidney development. May also play a role in the development and function of various tissues, regulating cell adhesion, spreading and survival through the binding of several integrins. The polypeptide is Nephronectin (NPNT) (Homo sapiens (Human)).